A 349-amino-acid chain; its full sequence is UDP-3-O-acylglucosamine N-acyltransferase (349 aa).

The active-site Proton acceptor is H240.

It belongs to the transferase hexapeptide repeat family. LpxD subfamily. In terms of assembly, homotrimer.

The catalysed reaction is a UDP-3-O-[(3R)-3-hydroxyacyl]-alpha-D-glucosamine + a (3R)-hydroxyacyl-[ACP] = a UDP-2-N,3-O-bis[(3R)-3-hydroxyacyl]-alpha-D-glucosamine + holo-[ACP] + H(+). It functions in the pathway bacterial outer membrane biogenesis; LPS lipid A biosynthesis. Functionally, catalyzes the N-acylation of UDP-3-O-acylglucosamine using 3-hydroxyacyl-ACP as the acyl donor. Is involved in the biosynthesis of lipid A, a phosphorylated glycolipid that anchors the lipopolysaccharide to the outer membrane of the cell. The protein is UDP-3-O-acylglucosamine N-acyltransferase of Porphyromonas gingivalis (strain ATCC 33277 / DSM 20709 / CIP 103683 / JCM 12257 / NCTC 11834 / 2561).